The sequence spans 267 residues: 3-deoxy-manno-octulosonate cytidylyltransferase (267 aa).

Belongs to the KdsB family.

It is found in the cytoplasm. The enzyme catalyses 3-deoxy-alpha-D-manno-oct-2-ulosonate + CTP = CMP-3-deoxy-beta-D-manno-octulosonate + diphosphate. Its pathway is nucleotide-sugar biosynthesis; CMP-3-deoxy-D-manno-octulosonate biosynthesis; CMP-3-deoxy-D-manno-octulosonate from 3-deoxy-D-manno-octulosonate and CTP: step 1/1. It functions in the pathway bacterial outer membrane biogenesis; lipopolysaccharide biosynthesis. In terms of biological role, activates KDO (a required 8-carbon sugar) for incorporation into bacterial lipopolysaccharide in Gram-negative bacteria. This chain is 3-deoxy-manno-octulosonate cytidylyltransferase, found in Paraburkholderia phymatum (strain DSM 17167 / CIP 108236 / LMG 21445 / STM815) (Burkholderia phymatum).